The following is a 407-amino-acid chain: Multidrug resistance protein MdtH (407 aa).

10 consecutive transmembrane segments (helical) span residues 13-33, 88-108, 139-159, 163-183, 210-230, 247-267, 277-297, 298-318, 340-360, and 368-388; these read CFLIIDNMFVVIGFYVVFPLI, LGFIIMSVANTPLLLCLSCML, VLMLEDSMCAIIGIVLGTWLL, FKLVCFTGAILFFIAGVFNAW, FVIYVFTLTGYYILSAQVMLM, WMYIIEAILSLLLIMPITWWS, LMVGLITMIISLFPIGLVKNL, HTLLILISLFYIGSIIAEPAR, LSLALGGTVGYSGSGWLYDIG, and LPWIILSIIGLITLLGLYCQF.

It belongs to the major facilitator superfamily. DHA1 family. MdtH (TC 2.A.1.2.21) subfamily.

Its subcellular location is the cell inner membrane. The protein is Multidrug resistance protein MdtH of Blochmanniella pennsylvanica (strain BPEN).